We begin with the raw amino-acid sequence, 234 residues long: Large ribosomal subunit protein uL1c (234 aa).

This sequence belongs to the universal ribosomal protein uL1 family. Part of the 50S ribosomal subunit.

Its subcellular location is the plastid. The protein localises to the chloroplast. Binds directly to 23S rRNA. Might be involved in E site tRNA release (Potential). In Guillardia theta (Cryptophyte), this protein is Large ribosomal subunit protein uL1c (rpl1).